The chain runs to 98 residues: NADH-ubiquinone oxidoreductase chain 4L (98 aa).

Transmembrane regions (helical) follow at residues 1–21 (MSMV…GLLM), 29–49 (SLLC…VTIL), and 61–81 (IILL…LVMV).

Belongs to the complex I subunit 4L family. In terms of assembly, core subunit of respiratory chain NADH dehydrogenase (Complex I) which is composed of 45 different subunits.

The protein resides in the mitochondrion inner membrane. It carries out the reaction a ubiquinone + NADH + 5 H(+)(in) = a ubiquinol + NAD(+) + 4 H(+)(out). In terms of biological role, core subunit of the mitochondrial membrane respiratory chain NADH dehydrogenase (Complex I) which catalyzes electron transfer from NADH through the respiratory chain, using ubiquinone as an electron acceptor. Part of the enzyme membrane arm which is embedded in the lipid bilayer and involved in proton translocation. The sequence is that of NADH-ubiquinone oxidoreductase chain 4L (MT-ND4L) from Erignathus barbatus (Bearded seal).